The chain runs to 206 residues: Holliday junction branch migration complex subunit RuvA (206 aa).

Residues 1–63 (MISSLRGDVI…DDAHTLYAFS (63 aa)) form a domain I region. The interval 64–142 (TSEQRETFGI…ALEATSGQAT (79 aa)) is domain II. A flexible linker region spans residues 143-150 (IGDIAATG). The interval 151-206 (NDTALQSQVVEALVGLGFTEAKAATAVKKILEEQNGTTDPSSVLREALQRLSGQKR) is domain III.

It belongs to the RuvA family. In terms of assembly, homotetramer. Forms an RuvA(8)-RuvB(12)-Holliday junction (HJ) complex. HJ DNA is sandwiched between 2 RuvA tetramers; dsDNA enters through RuvA and exits via RuvB. An RuvB hexamer assembles on each DNA strand where it exits the tetramer. Each RuvB hexamer is contacted by two RuvA subunits (via domain III) on 2 adjacent RuvB subunits; this complex drives branch migration. In the full resolvosome a probable DNA-RuvA(4)-RuvB(12)-RuvC(2) complex forms which resolves the HJ.

Its subcellular location is the cytoplasm. Its function is as follows. The RuvA-RuvB-RuvC complex processes Holliday junction (HJ) DNA during genetic recombination and DNA repair, while the RuvA-RuvB complex plays an important role in the rescue of blocked DNA replication forks via replication fork reversal (RFR). RuvA specifically binds to HJ cruciform DNA, conferring on it an open structure. The RuvB hexamer acts as an ATP-dependent pump, pulling dsDNA into and through the RuvAB complex. HJ branch migration allows RuvC to scan DNA until it finds its consensus sequence, where it cleaves and resolves the cruciform DNA. This chain is Holliday junction branch migration complex subunit RuvA, found in Corynebacterium urealyticum (strain ATCC 43042 / DSM 7109).